Reading from the N-terminus, the 2174-residue chain is Mediator of RNA polymerase II transcription subunit 13 (2174 aa).

Position 395 is a phosphoserine (S395). The disordered stretch occupies residues 435–477; sequence RNAGQQGQAPSLGQQQQILPKHKTNEKQEKSEKPQKRPLTPFH. The span at 438–451 shows a compositional bias: low complexity; it reads GQQGQAPSLGQQQQ. Residues 457–469 show a composition bias toward basic and acidic residues; sequence KTNEKQEKSEKPQ. 4 positions are modified to phosphoserine: S500, S504, S530, and S537. Positions 709–730 are enriched in basic and acidic residues; the sequence is FPDKKDRQNSEREAGKKHKVED. Disordered regions lie at residues 709–735, 749–769, and 787–816; these read FPDK…TSSV, SPSI…PSTS, and FNSD…ESKT. Over residues 805–815 the composition is skewed to basic and acidic residues; that stretch reads SDDKASCKESK. A phosphoserine mark is found at S826 and S890. The interval 959 to 1054 is disordered; that stretch reads FIKEGDGSNM…ASTPSTCRPL (96 aa). Over residues 992–1003 the composition is skewed to low complexity; it reads PPSNSGAGILPS. Pro residues predominate over residues 1004–1015; that stretch reads PSTPRFPTPRTP. At S1029 the chain carries Phosphoserine. The segment covering 1040–1053 has biased composition (polar residues); it reads DLYSPASTPSTCRP. 2 consecutive short sequence motifs (LXXLL motif) follow at residues 1188 to 1192 and 1279 to 1283; these read LILLL and LRMLL. Composition is skewed to polar residues over residues 1484–1498 and 1563–1606; these read SQSL…NTGN and SMNS…SLPT. 3 disordered regions span residues 1484-1505, 1557-1617, and 2015-2048; these read SQSL…PSAT, SFPP…ESTM, and LPAS…RLLS.

The protein belongs to the Mediator complex subunit 13 family. Component of the Mediator complex, which is composed of MED1, MED4, MED6, MED7, MED8, MED9, MED10, MED11, MED12, MED13, MED13L, MED14, MED15, MED16, MED17, MED18, MED19, MED20, MED21, MED22, MED23, MED24, MED25, MED26, MED27, MED29, MED30, MED31, CCNC, CDK8 and CDC2L6/CDK11. The MED12, MED13, CCNC and CDK8 subunits form a distinct module termed the CDK8 module. Mediator containing the CDK8 module is less active than Mediator lacking this module in supporting transcriptional activation. Individual preparations of the Mediator complex lacking one or more distinct subunits have been variously termed ARC, CRSP, DRIP, PC2, SMCC and TRAP. Ubiquitous.

It localises to the nucleus. Functionally, component of the Mediator complex, a coactivator involved in the regulated transcription of nearly all RNA polymerase II-dependent genes. Mediator functions as a bridge to convey information from gene-specific regulatory proteins to the basal RNA polymerase II transcription machinery. Mediator is recruited to promoters by direct interactions with regulatory proteins and serves as a scaffold for the assembly of a functional preinitiation complex with RNA polymerase II and the general transcription factors. This chain is Mediator of RNA polymerase II transcription subunit 13, found in Homo sapiens (Human).